The chain runs to 473 residues: Sulfhydrylase-like protein lolC2 (473 aa).

K226 carries the post-translational modification N6-(pyridoxal phosphate)lysine.

This sequence belongs to the trans-sulfuration enzymes family. The cofactor is pyridoxal 5'-phosphate.

It participates in alkaloid biosynthesis. Sulfhydrylase-like protein; part of the gene cluster that mediates the biosynthesis of loline alkaloids, potent insecticidal agents composed of a pyrrolizidine ring system and an uncommon ether bridge linking carbons 2 and 7. Lolines are structurally differentiated by the various modifications of the L-amino group and include norloline, loline, N-methylloline, N-acetylloline, N-acetylnorloline, and N-formylloline. The first committed step is the condensation of O-acetyl-L-homoserine (derived from L-aspartic acid) and L-proline, probably catalyzed by the gamma-type pyridoxal 5'-phosphate(PLP)-dependent enzyme lolC, to give the diamino diacid, NACPP. Ensuing cyclization, decarboxylation, and acetylation steps yield 1-exo-acetamidopyrrolizidine (AcAP). LolO is required for installation of the ether bridge upon the pathway intermediate, 1-exo-acetamidopyrrolizidine (AcAP). In sequential 2-oxoglutarate- and O(2)-consuming steps, lolO removes hydrogens from C2 and C7 of AcAP to form both carbon-oxygen bonds in N-acetylnorloline (NANL), the precursor to all other lolines. The enzymes lolD, lolE, lolF and lolT have also been proposed to be involved in the ether-bridge installation. Further processing of the exocyclic moiety of NANL by fungal N-acetamidase (LolN), methyltransferase (LolM), and cytochrome P450 (LolP) enzymes, with occasional involvement of a plant acetyltransferase, generates the other known lolines. LolN transforms NANL to norlonine which is monomethylated and dimethylated to respectively lonine and N-methyllonine (NML) by lolM. LolP catalyzes hydroxylation of the methyl group in N-methylloline (NML) and further oxygenation to N-formylloline (NFL). A plant acetyltransferase is responsible for the acetylation of loline to form N-acetylloline (NAL). LolA might interact with aspartate kinase to prevent feedback inhibition of its activity by these end products and thereby promote production of L-homoserine from L-aspartate. The sequence is that of Sulfhydrylase-like protein lolC2 from Epichloe uncinata (Endophyte fungus).